The following is a 197-amino-acid chain: uncharacterized protein (197 aa).

Residues 11 to 31 (ICGFSLVALTIAGIVGGVYLV) form a helical membrane-spanning segment.

It localises to the membrane. This is an uncharacterized protein from Mycoplasma pneumoniae (strain ATCC 29342 / M129 / Subtype 1) (Mycoplasmoides pneumoniae).